The following is a 513-amino-acid chain: GMP synthase [glutamine-hydrolyzing] (513 aa).

A Glutamine amidotransferase type-1 domain is found at 3-200 (SVLVLDFGSQ…LITIAGITPD (198 aa)). C80 acts as the Nucleophile in catalysis. Catalysis depends on residues H174 and E176. The region spanning 201–388 (WSSKSFIEHQ…LGIAEDILMR (188 aa)) is the GMPS ATP-PPase domain. 228–234 (SGGVDST) serves as a coordination point for ATP.

Homodimer.

It carries out the reaction XMP + L-glutamine + ATP + H2O = GMP + L-glutamate + AMP + diphosphate + 2 H(+). Its pathway is purine metabolism; GMP biosynthesis; GMP from XMP (L-Gln route): step 1/1. Catalyzes the synthesis of GMP from XMP. This chain is GMP synthase [glutamine-hydrolyzing], found in Pelodictyon phaeoclathratiforme (strain DSM 5477 / BU-1).